We begin with the raw amino-acid sequence, 237 residues long: MSLKDRYLNLELKLINKLQELPYVHQFIHDRISGRITLFLIVVGTLAFFNELYITIEMSLLQKNTSEELERGRIDESLKLHRMLVSDEYHGKEYKDEKSGIVIEEFEDRDKFFAKPVFVSELDVECNVIVDGKELLSTPLKFHVEFSPEDYENEKRPEFGTTLRVLRLRLYHYFKDCEIYRDIIKNEGGEGARKFTISNGVKIYNHKDELLPLNIDDVQLCFLKIDTGNTIKCEFIL.

The chain crosses the membrane as a helical span at residues 36–56; it reads ITLFLIVVGTLAFFNELYITI.

Its subcellular location is the endoplasmic reticulum membrane. Functionally, part of the third module of ergosterol biosynthesis pathway that includes the late steps of the pathway. ERG29 regulates the activity of the iron-containing C4-methylsterol oxidase ERG25. The third module or late pathway involves the ergosterol synthesis itself through consecutive reactions that mainly occur in the endoplasmic reticulum (ER) membrane. Firstly, the squalene synthase ERG9 catalyzes the condensation of 2 farnesyl pyrophosphate moieties to form squalene, which is the precursor of all steroids. Squalene synthase is crucial for balancing the incorporation of farnesyl diphosphate (FPP) into sterol and nonsterol isoprene synthesis. Secondly, the squalene epoxidase ERG1 catalyzes the stereospecific oxidation of squalene to (S)-2,3-epoxysqualene, which is considered to be a rate-limiting enzyme in steroid biosynthesis. Then, the lanosterol synthase ERG7 catalyzes the cyclization of (S)-2,3 oxidosqualene to lanosterol, a reaction that forms the sterol core. In the next steps, lanosterol is transformed to zymosterol through a complex process involving various demethylation, reduction and desaturation reactions. The lanosterol 14-alpha-demethylase ERG11 (also known as CYP51) catalyzes C14-demethylation of lanosterol to produce 4,4'-dimethyl cholesta-8,14,24-triene-3-beta-ol, which is critical for ergosterol biosynthesis. The C-14 reductase ERG24 reduces the C14=C15 double bond of 4,4-dimethyl-cholesta-8,14,24-trienol to produce 4,4-dimethyl-cholesta-8,24-dienol. 4,4-dimethyl-cholesta-8,24-dienol is substrate of the C-4 demethylation complex ERG25-ERG26-ERG27 in which ERG25 catalyzes the three-step monooxygenation required for the demethylation of 4,4-dimethyl and 4alpha-methylsterols, ERG26 catalyzes the oxidative decarboxylation that results in a reduction of the 3-beta-hydroxy group at the C-3 carbon to an oxo group, and ERG27 is responsible for the reduction of the keto group on the C-3. ERG28 has a role as a scaffold to help anchor ERG25, ERG26 and ERG27 to the endoplasmic reticulum and ERG29 regulates the activity of the iron-containing C4-methylsterol oxidase ERG25. Then, the sterol 24-C-methyltransferase ERG6 catalyzes the methyl transfer from S-adenosyl-methionine to the C-24 of zymosterol to form fecosterol. The C-8 sterol isomerase ERG2 catalyzes the reaction which results in unsaturation at C-7 in the B ring of sterols and thus converts fecosterol to episterol. The sterol-C5-desaturase ERG3 then catalyzes the introduction of a C-5 double bond in the B ring to produce 5-dehydroepisterol. The C-22 sterol desaturase ERG5 further converts 5-dehydroepisterol into ergosta-5,7,22,24(28)-tetraen-3beta-ol by forming the C-22(23) double bond in the sterol side chain. Finally, ergosta-5,7,22,24(28)-tetraen-3beta-ol is substrate of the C-24(28) sterol reductase ERG4 to produce ergosterol. In terms of biological role, plays a role in maintaining mitochondrial and plasma membrane integrity and consequently impacting the iron homeostasis, respiratory metabolism and antioxidant response. The protein is Ergosterol biosynthesis protein 29 of Saccharomyces cerevisiae (strain ATCC 204508 / S288c) (Baker's yeast).